The primary structure comprises 142 residues: MKIFFSGSIRGGNKYRRQYGQILAFLQAFGETISEHSDRPEAFDDGGLKGDAAIYARDTHWIREADLLVAEVSQPSIGVGYEIAYAEARNIPILALYHVGAESPMSAMVFGNPKITSIRYDSLSELWPVLKDTLAETHLPPK.

Substrate contacts are provided by residues 4–10 (FFSGSIR), Y19, H36, E82, and 106–108 (SAM).

This sequence belongs to the 2'-deoxynucleoside 5'-phosphate N-hydrolase 1 family. In terms of assembly, monomer and homodimer.

It catalyses the reaction a pyrimidine 2'-deoxyribonucleoside 5'-phosphate + H2O = a pyrimidine nucleobase + 2-deoxy-D-ribose 5-phosphate. The enzyme catalyses a purine 2'-deoxyribonucleoside 5'-phosphate + H2O = a purine nucleobase + 2-deoxy-D-ribose 5-phosphate. Catalyzes the cleavage of the N-glycosidic bond of deoxyribonucleoside 5'-monophosphates to yield deoxyribose 5-phosphate and a purine or pyrimidine base. The chain is Putative 2'-deoxynucleoside 5'-phosphate N-hydrolase 1 from Syntrophotalea carbinolica (strain DSM 2380 / NBRC 103641 / GraBd1) (Pelobacter carbinolicus).